The sequence spans 819 residues: DNA mismatch repair protein MutS (819 aa).

596–603 (GPNMSGKS) contacts ATP.

The protein belongs to the DNA mismatch repair MutS family.

Its function is as follows. This protein is involved in the repair of mismatches in DNA. It is possible that it carries out the mismatch recognition step. This protein has a weak ATPase activity. The polypeptide is DNA mismatch repair protein MutS (Thermosipho melanesiensis (strain DSM 12029 / CIP 104789 / BI429)).